The following is a 181-amino-acid chain: Dual-action ribosomal maturation protein DarP (181 aa).

Belongs to the DarP family.

The protein resides in the cytoplasm. Member of a network of 50S ribosomal subunit biogenesis factors which assembles along the 30S-50S interface, preventing incorrect 23S rRNA structures from forming. Promotes peptidyl transferase center (PTC) maturation. This chain is Dual-action ribosomal maturation protein DarP, found in Actinobacillus succinogenes (strain ATCC 55618 / DSM 22257 / CCUG 43843 / 130Z).